The following is a 350-amino-acid chain: Very-long-chain 3-oxoacyl-CoA reductase (350 aa).

Residues 28-48 form a helical membrane-spanning segment; the sequence is SLVLLAGIGALSVGTFALRLV. NADP(+)-binding residues include Val-79, Asp-134, Asn-161, Lys-196, Tyr-228, Lys-232, Val-261, and Ser-263. Residue Tyr-228 is the Proton donor of the active site. The active-site Lowers pKa of active site Tyr is Lys-232.

It belongs to the short-chain dehydrogenases/reductases (SDR) family.

It localises to the endoplasmic reticulum membrane. It carries out the reaction a very-long-chain (3R)-3-hydroxyacyl-CoA + NADP(+) = a very-long-chain 3-oxoacyl-CoA + NADPH + H(+). It participates in lipid metabolism; fatty acid biosynthesis. Its function is as follows. Component of the microsomal membrane bound fatty acid elongation system, which produces the 26-carbon very long-chain fatty acids (VLCFA) from palmitate. Catalyzes the reduction of the 3-ketoacyl-CoA intermediate that is formed in each cycle of fatty acid elongation. VLCFAs serve as precursors for ceramide and sphingolipids. In Mycosarcoma maydis (Corn smut fungus), this protein is Very-long-chain 3-oxoacyl-CoA reductase.